An 86-amino-acid chain; its full sequence is MNYFIFLVVACLLTAGTEGKKDGYPVEGDNCAFACFGYDNAYCDKLCKDKKADSGYCYWVHILCYCYGLPDKEPTKTSGRCKPGKK.

The first 19 residues, 1 to 19, serve as a signal peptide directing secretion; the sequence is MNYFIFLVVACLLTAGTEG. The LCN-type CS-alpha/beta domain maps to 21-82; that stretch reads KDGYPVEGDN…EPTKTSGRCK (62 aa). 4 disulfide bridges follow: Cys-31–Cys-81, Cys-35–Cys-57, Cys-43–Cys-64, and Cys-47–Cys-66. Position 83 is a proline amide (Pro-83).

It belongs to the long (4 C-C) scorpion toxin superfamily. Sodium channel inhibitor family. Alpha subfamily. Expressed by the venom gland.

It localises to the secreted. Functionally, alpha toxins bind voltage-independently at site-3 of sodium channels (Nav) and inhibit the inactivation of the activated channels, thereby blocking neuronal transmission. The polypeptide is Putative sodium channel toxin Ts17 (Tityus serrulatus (Brazilian scorpion)).